The primary structure comprises 635 residues: BTB/POZ domain-containing protein SETH6 (635 aa).

The BTB domain maps to 39–104 (SDLTIEVGSA…CYGVGVQYNS (66 aa)). One can recognise an NPH3 domain in the interval 206–494 (DWWGRSLPIL…VQVLFYEQTR (289 aa)). A Phosphotyrosine modification is found at Tyr435. The segment at 604–635 (QSVASSGKKHTEEKTNSERRFMFQKRRCHSVS) is disordered. A compositionally biased stretch (basic and acidic residues) spans 612–624 (KHTEEKTNSERRF). Positions 625 to 635 (MFQKRRCHSVS) are enriched in basic residues.

This sequence belongs to the NPH3 family.

Its pathway is protein modification; protein ubiquitination. In terms of biological role, may act as a substrate-specific adapter of an E3 ubiquitin-protein ligase complex (CUL3-RBX1-BTB) which mediates the ubiquitination and subsequent proteasomal degradation of target proteins. This chain is BTB/POZ domain-containing protein SETH6 (SETH6), found in Arabidopsis thaliana (Mouse-ear cress).